Here is a 314-residue protein sequence, read N- to C-terminus: Nucleoprotein (314 aa).

N-acetylmethionine; by host is present on Met-1. RNA-binding residues include Tyr-38, Tyr-41, Arg-118, Lys-237, and Ser-266.

Belongs to the tenuiviruses nucleocapsid protein family.

Its subcellular location is the virion. It is found in the host cytoplasm. Its function is as follows. Encapsidates the genome, protecting it from nucleases. The encapsidated genomic RNA is termed the nucleocapsid (NC), and serves as template for viral transcription and replication. This is Nucleoprotein from Wheat yellow head virus (WYHV).